The following is a 728-amino-acid chain: Catalase-peroxidase (728 aa).

Positions 91 to 218 (WHSAGTYRIA…LAAVQMGLIY (128 aa)) form a cross-link, tryptophyl-tyrosyl-methioninium (Trp-Tyr) (with M-244). The active-site Proton acceptor is the His-92. The tryptophyl-tyrosyl-methioninium (Tyr-Met) (with W-91) cross-link spans 218–244 (YVNPEGPDGNPDPVAAARDIRETFARM). Residue His-259 participates in heme b binding.

Belongs to the peroxidase family. Peroxidase/catalase subfamily. In terms of assembly, homodimer or homotetramer. Heme b serves as cofactor. Post-translationally, formation of the three residue Trp-Tyr-Met cross-link is important for the catalase, but not the peroxidase activity of the enzyme.

It carries out the reaction H2O2 + AH2 = A + 2 H2O. The enzyme catalyses 2 H2O2 = O2 + 2 H2O. In terms of biological role, bifunctional enzyme with both catalase and broad-spectrum peroxidase activity. This is Catalase-peroxidase from Burkholderia multivorans (strain ATCC 17616 / 249).